A 156-amino-acid chain; its full sequence is Pre-mRNA-splicing factor SNT309 (156 aa).

Associated with the spliceosome.

The protein localises to the nucleus. Its function is as follows. Involved in pre-mRNA splicing. This chain is Pre-mRNA-splicing factor SNT309 (SNT309), found in Candida glabrata (strain ATCC 2001 / BCRC 20586 / JCM 3761 / NBRC 0622 / NRRL Y-65 / CBS 138) (Yeast).